The sequence spans 820 residues: Leucine--tRNA ligase (820 aa).

Positions 40-51 (PYPSGAGLHVGH) match the 'HIGH' region motif. Residues 601 to 605 (KMSKS) carry the 'KMSKS' region motif. Lysine 604 lines the ATP pocket.

It belongs to the class-I aminoacyl-tRNA synthetase family.

It is found in the cytoplasm. The enzyme catalyses tRNA(Leu) + L-leucine + ATP = L-leucyl-tRNA(Leu) + AMP + diphosphate. This chain is Leucine--tRNA ligase, found in Chlamydia pneumoniae (Chlamydophila pneumoniae).